A 38-amino-acid polypeptide reads, in one-letter code: Putative ORF10 protein (38 aa).

As to quaternary structure, binds host ZYG11B. This would not play any role in SARS-CoV-2 infection.

The polypeptide is Putative ORF10 protein (Severe acute respiratory syndrome coronavirus 2 (2019-nCoV)).